We begin with the raw amino-acid sequence, 224 residues long: UPF0502 protein Psyr_2419 (224 aa).

It belongs to the UPF0502 family.

This chain is UPF0502 protein Psyr_2419, found in Pseudomonas syringae pv. syringae (strain B728a).